Here is a 728-residue protein sequence, read N- to C-terminus: Catalase-peroxidase 1 (728 aa).

A cross-link (tryptophyl-tyrosyl-methioninium (Trp-Tyr) (with M-244)) is located at residues W91 to Y218. Residue H92 is the Proton acceptor of the active site. Residues Y218 to M244 constitute a cross-link (tryptophyl-tyrosyl-methioninium (Tyr-Met) (with W-91)). H259 lines the heme b pocket.

Belongs to the peroxidase family. Peroxidase/catalase subfamily. In terms of assembly, homodimer or homotetramer. It depends on heme b as a cofactor. Formation of the three residue Trp-Tyr-Met cross-link is important for the catalase, but not the peroxidase activity of the enzyme.

The catalysed reaction is H2O2 + AH2 = A + 2 H2O. The enzyme catalyses 2 H2O2 = O2 + 2 H2O. In terms of biological role, bifunctional enzyme with both catalase and broad-spectrum peroxidase activity. The sequence is that of Catalase-peroxidase 1 from Burkholderia vietnamiensis (strain G4 / LMG 22486) (Burkholderia cepacia (strain R1808)).